The sequence spans 195 residues: Inhibitor of glycogen debranching 1 (195 aa).

The span at 1 to 18 (MTDPHLNTPQVSTSPTFE) shows a compositional bias: polar residues. Residues 1–101 (MTDPHLNTPQ…ERRSSGPMDF (101 aa)) are disordered. Ser-64 is subject to Phosphoserine. Phosphothreonine is present on Thr-65. The segment covering 75 to 95 (EQARERESSIGEHAPGAERRS) has biased composition (basic and acidic residues). Phosphoserine occurs at positions 95 and 96. Position 132 is a phosphothreonine (Thr-132). Positions 146–175 (NSYLDNNSNGNSARVPHGSPPQLGTRRKSS) are disordered. Polar residues predominate over residues 148-157 (YLDNNSNGNS). Ser-164 is modified (phosphoserine).

In terms of assembly, interacts with GDB1.

Its subcellular location is the cytoplasm. Its function is as follows. Acts as an inhibitor of GDB1, enhancing the ability of cells to store glucose as glycogen. This chain is Inhibitor of glycogen debranching 1 (IGD1), found in Saccharomyces cerevisiae (strain ATCC 204508 / S288c) (Baker's yeast).